A 429-amino-acid polypeptide reads, in one-letter code: Glutamate-1-semialdehyde 2,1-aminomutase 2 (429 aa).

The residue at position 267 (Lys267) is an N6-(pyridoxal phosphate)lysine.

Belongs to the class-III pyridoxal-phosphate-dependent aminotransferase family. HemL subfamily. Homodimer. It depends on pyridoxal 5'-phosphate as a cofactor.

It is found in the cytoplasm. It catalyses the reaction (S)-4-amino-5-oxopentanoate = 5-aminolevulinate. It participates in porphyrin-containing compound metabolism; protoporphyrin-IX biosynthesis; 5-aminolevulinate from L-glutamyl-tRNA(Glu): step 2/2. The protein is Glutamate-1-semialdehyde 2,1-aminomutase 2 (gsaB) of Bacillus subtilis (strain 168).